The primary structure comprises 394 residues: ATP phosphoribosyltransferase regulatory subunit (394 aa).

Belongs to the class-II aminoacyl-tRNA synthetase family. HisZ subfamily. Heteromultimer composed of HisG and HisZ subunits.

It localises to the cytoplasm. Its pathway is amino-acid biosynthesis; L-histidine biosynthesis; L-histidine from 5-phospho-alpha-D-ribose 1-diphosphate: step 1/9. Its function is as follows. Required for the first step of histidine biosynthesis. May allow the feedback regulation of ATP phosphoribosyltransferase activity by histidine. This is ATP phosphoribosyltransferase regulatory subunit from Saccharophagus degradans (strain 2-40 / ATCC 43961 / DSM 17024).